The following is a 159-amino-acid chain: Ankyrin repeat domain-containing protein 37 (159 aa).

ANK repeat units lie at residues 1–25 (MLLL…SVNA), 30–59 (QEQS…DLNQ), and 63–92 (LGET…QIGV). Positions 130–150 (EQQERDPRAPVLRQKRSFRTV) match the Nuclear localization signal motif.

Post-translationally, ubiquitinated by the CRL2(FEM1B) complex, leading to its degradation. Expressed testis, ovary, uterus, kidney, liver, but not in other tissues.

It is found in the nucleus. The protein resides in the cytoplasm. This Mus musculus (Mouse) protein is Ankyrin repeat domain-containing protein 37.